A 319-amino-acid polypeptide reads, in one-letter code: Ornithine carbamoyltransferase (319 aa).

Carbamoyl phosphate is bound by residues 57 to 60, Gln84, Arg108, and 135 to 138; these read STRT and HPCQ. L-ornithine contacts are provided by residues Asn166, Asp230, and 234-235; that span reads SM. Residues 270–271 and Arg298 contribute to the carbamoyl phosphate site; that span reads CL.

The protein belongs to the aspartate/ornithine carbamoyltransferase superfamily. OTCase family.

The protein resides in the cytoplasm. It carries out the reaction carbamoyl phosphate + L-ornithine = L-citrulline + phosphate + H(+). The protein operates within amino-acid biosynthesis; L-arginine biosynthesis; L-arginine from L-ornithine and carbamoyl phosphate: step 1/3. Reversibly catalyzes the transfer of the carbamoyl group from carbamoyl phosphate (CP) to the N(epsilon) atom of ornithine (ORN) to produce L-citrulline. The protein is Ornithine carbamoyltransferase (argF) of Bacillus subtilis (strain 168).